The chain runs to 219 residues: Predicted GPI-anchored protein 6 (219 aa).

A signal peptide spans 1–19 (MQFQTLLVVAGSLVASTLA). Residues asparagine 21, asparagine 173, and asparagine 188 are each glycosylated (N-linked (GlcNAc...) asparagine). A lipid anchor (GPI-anchor amidated glycine) is attached at glycine 194. The propeptide at 195–219 (GAVGGASNQITVGFAAIAGLAAILL) is removed in mature form.

This sequence belongs to the flocculin family. Post-translationally, the GPI-anchor is attached to the protein in the endoplasmic reticulum and serves to target the protein to the cell surface. There, the glucosamine-inositol phospholipid moiety is cleaved off and the GPI-modified mannoprotein is covalently attached via its lipidless GPI glycan remnant to the 1,6-beta-glucan of the outer cell wall layer.

The protein resides in the secreted. It is found in the cell wall. Its subcellular location is the membrane. Probable cell wall protein that participates directly in adhesive cell-cell interactions. In Candida albicans (strain SC5314 / ATCC MYA-2876) (Yeast), this protein is Predicted GPI-anchored protein 6 (PGA6).